Here is a 237-residue protein sequence, read N- to C-terminus: Ribonuclease PH (237 aa).

Residues arginine 86 and 124 to 126 (GTR) contribute to the phosphate site.

It belongs to the RNase PH family. As to quaternary structure, homohexameric ring arranged as a trimer of dimers.

The enzyme catalyses tRNA(n+1) + phosphate = tRNA(n) + a ribonucleoside 5'-diphosphate. Phosphorolytic 3'-5' exoribonuclease that plays an important role in tRNA 3'-end maturation. Removes nucleotide residues following the 3'-CCA terminus of tRNAs; can also add nucleotides to the ends of RNA molecules by using nucleoside diphosphates as substrates, but this may not be physiologically important. Probably plays a role in initiation of 16S rRNA degradation (leading to ribosome degradation) during starvation. This chain is Ribonuclease PH, found in Methylobacterium radiotolerans (strain ATCC 27329 / DSM 1819 / JCM 2831 / NBRC 15690 / NCIMB 10815 / 0-1).